Reading from the N-terminus, the 95-residue chain is Pyrimidine/purine nucleoside phosphorylase (95 aa).

The protein belongs to the nucleoside phosphorylase PpnP family.

The catalysed reaction is a purine D-ribonucleoside + phosphate = a purine nucleobase + alpha-D-ribose 1-phosphate. It catalyses the reaction adenosine + phosphate = alpha-D-ribose 1-phosphate + adenine. It carries out the reaction cytidine + phosphate = cytosine + alpha-D-ribose 1-phosphate. The enzyme catalyses guanosine + phosphate = alpha-D-ribose 1-phosphate + guanine. The catalysed reaction is inosine + phosphate = alpha-D-ribose 1-phosphate + hypoxanthine. It catalyses the reaction thymidine + phosphate = 2-deoxy-alpha-D-ribose 1-phosphate + thymine. It carries out the reaction uridine + phosphate = alpha-D-ribose 1-phosphate + uracil. The enzyme catalyses xanthosine + phosphate = alpha-D-ribose 1-phosphate + xanthine. In terms of biological role, catalyzes the phosphorolysis of diverse nucleosides, yielding D-ribose 1-phosphate and the respective free bases. Can use uridine, adenosine, guanosine, cytidine, thymidine, inosine and xanthosine as substrates. Also catalyzes the reverse reactions. The chain is Pyrimidine/purine nucleoside phosphorylase from Yersinia pestis bv. Antiqua (strain Antiqua).